The chain runs to 116 residues: Large ribosomal subunit protein uL18 (116 aa).

It belongs to the universal ribosomal protein uL18 family. In terms of assembly, part of the 50S ribosomal subunit; part of the 5S rRNA/L5/L18/L25 subcomplex. Contacts the 5S and 23S rRNAs.

Its function is as follows. This is one of the proteins that bind and probably mediate the attachment of the 5S RNA into the large ribosomal subunit, where it forms part of the central protuberance. The sequence is that of Large ribosomal subunit protein uL18 from Hahella chejuensis (strain KCTC 2396).